A 192-amino-acid chain; its full sequence is Peptidyl-tRNA hydrolase (192 aa).

Catalysis depends on His-19, which acts as the Proton acceptor. 3 residues coordinate tRNA: Tyr-64, Asn-66, and Asn-112.

This sequence belongs to the PTH family. Monomer.

The protein localises to the cytoplasm. It carries out the reaction an N-acyl-L-alpha-aminoacyl-tRNA + H2O = an N-acyl-L-amino acid + a tRNA + H(+). In terms of biological role, hydrolyzes ribosome-free peptidyl-tRNAs (with 1 or more amino acids incorporated), which drop off the ribosome during protein synthesis, or as a result of ribosome stalling. Catalyzes the release of premature peptidyl moieties from peptidyl-tRNA molecules trapped in stalled 50S ribosomal subunits, and thus maintains levels of free tRNAs and 50S ribosomes. The chain is Peptidyl-tRNA hydrolase from Acidiphilium cryptum (strain JF-5).